Consider the following 1343-residue polypeptide: MNLGDATTRPPVGRRMKAQAPPPPRPPQPAPRRIFRNAVPDGGGSSGGDCKENMLRSYVDLHISLPTGYQTTINVDGRKALMDLLVDLCSQYHLNPAYHTLELLSPDAQPVSFKPNALLGALDVSCALIKERVLEDRVIRKPPPKVPEKTVRLVVNYHRSQKAVVRVNPLAPLQTLVPVICQKCEFDPAHVLLFKDNINHQQLDLDKSLSDLGIRELYVLDQTLVLQPKMASTPALNYSAESLRSNSLSGSEKKGLLGFLKFNRRKSKGMSVVASGPCVEARPSTLGQSQSVMNISKMSPKVELKKRRAPAPPPAPTQTLPPTSQISLGSPSSHNLLKKRKAPAPPPTPPPSTPEPDISTYVPTATVQEHYIPASVERTPRASTPADDSDLSHSIEDSEPARSICSSSSGDDAAAVGSSSSSLAEEPVTHRADVIAPFTTSTPEPEPKPEYEPELKKEASPRSTPELEPGPRPEVPAAEDLEVEMELKMEETENNRHSGIAWLHSAHESVLERRVQQEVETVSVASSESFADHGYAASEDMAEESGPVSPSERMQSVSPMDIMSLNSDSTLPVKQSKESSSDSDEGCATWGSRQSSGHIQDGQKSIKRQNGYEEDPEITAQIHLTLADLDANLADLNHSDGASVFVDDEIPVSIVDMDIPVTAIDEVLDDDQCSASECESVLLRSTQSISSKPCTPCGVIQNKNNNACLTEEKHRSPFPDIEKQLQTATLTVIDKPTIQSPTSKKPSQDAKITDNMEQKTTFNSEAKSKSETVELTSQKDTVLQKSQSFVRPDVQSVQKERTSSTRVLPTQGKITLSSFSRFGMKTFTVIPPKPAVSQTKPAGSLVTGAIKIDEQGNMVTQRQISSGPEKNNTPSVDTTRADKTPLVKAKAFWSTTEKQEKLTTAKTEPIVNNGDTDVFKASAVTGSFKLSPPEETHKEVIIVERKPISGVASKPSFSENHAEKRDLSFLIPSRRTSSQYVASVIAKNNKNSSIPKTKIDTTPAPLSISGVQNPVNQLLNNEVKPTSIHKPAVTVKPTENPVPSFRPKCLQSYVAEKPTSSERISTLHGGDKTKSLDSQPLSIKIQPFPHVSAHIKSFSEEATSINNFPDTSSARQTPTDTTHPPLAKKPELHKSEIPSEPNQGNVFGPVKKFKPVIFKPVQQETSIHSSLMEAIQSGEGIERLRKVSDLPTSCTVKKPSYNDPENERSALLSAIRASSTSAKLKKTKSVASKELEQLRKVEEDRNVHTEVISPRPTSPDFVPPLPPSFSPPPPPPPPLAPAKPPVVLPPGGNPEAAREALLEAIRSGSGAQQLRKVPVTQTRRQVNGRLGTIQATSPLSYGH.

6 disordered regions span residues 1–51, 301–479, 522–613, 733–808, 1056–1077, and 1105–1148; these read MNLG…GDCK, KVEL…PAAE, VSVA…NGYE, IDKP…TRVL, EKPTSSERISTLHGGDKTKSLD, and INNF…NVFG. The segment covering 20-30 has biased composition (pro residues); the sequence is APPPPRPPQPA. Positions 305–310 match the KKRRAP 1 motif; the sequence is KKRRAP. Polar residues predominate over residues 324 to 335; the sequence is SQISLGSPSSHN. Positions 338–343 match the KKRRAP 2 motif; sequence KKRKAP. Pro residues predominate over residues 343-354; it reads PAPPPTPPPSTP. Positions 390 to 400 are enriched in basic and acidic residues; it reads DLSHSIEDSEP. Low complexity predominate over residues 406 to 422; sequence SSSSGDDAAAVGSSSSS. Residues 445–460 are compositionally biased toward basic and acidic residues; the sequence is PEPKPEYEPELKKEAS. The segment covering 552–573 has biased composition (polar residues); that stretch reads ERMQSVSPMDIMSLNSDSTLPV. Positions 746 to 757 are enriched in basic and acidic residues; that stretch reads PSQDAKITDNME. Residues 773 to 789 show a composition bias toward polar residues; that stretch reads VELTSQKDTVLQKSQSF. A compositionally biased stretch (polar residues) spans 1105-1122; it reads INNFPDTSSARQTPTDTT. Residues 1128-1137 show a composition bias toward basic and acidic residues; sequence KKPELHKSEI. WH2 domains follow at residues 1167–1187 and 1207–1227; these read IHSSLMEAIQSGEGIERLRKV and ERSALLSAIRASSTSAKLKKT. A disordered region spans residues 1246–1297; that stretch reads NVHTEVISPRPTSPDFVPPLPPSFSPPPPPPPPLAPAKPPVVLPPGGNPEAA. A compositionally biased stretch (pro residues) spans 1261 to 1292; sequence FVPPLPPSFSPPPPPPPPLAPAKPPVVLPPGG. Residues 1297–1317 form the WH2 3 domain; it reads AREALLEAIRSGSGAQQLRKV.

As to quaternary structure, interacts with pacsin1.

Its subcellular location is the cell membrane. The protein resides in the cytoplasm. It localises to the cytoskeleton. It is found in the cell projection. The protein localises to the ruffle. Its subcellular location is the cytosol. In terms of biological role, plays an important role in the reorganization of the actin cytoskeleton. Binds to and sequesters actin monomers (G actin). Nucleates actin polymerization by assembling three actin monomers in cross-filament orientation and thereby promotes growth of actin filaments at the barbed end. Can also mediate actin depolymerization at barbed ends and severing of actin filaments. Promotes formation of cell ruffles. Regulates neuron morphogenesis and increases branching of axons and dendrites. Required for normal embryonic development, including normal development of laterality, normal body size and shape, as well as normal brain, heart and kidney development. Required for normal development of stereocilia and kinocilia in sensory hair cells of neuromasts in the posterior lateral line organ, and thus also for balance keeping and normal swimming behavior. This chain is Protein cordon-bleu (cobl), found in Danio rerio (Zebrafish).